The sequence spans 245 residues: 2,3-bisphosphoglycerate-dependent phosphoglycerate mutase (245 aa).

Substrate-binding positions include Arg8 to Asn15, Thr21 to Gly22, Arg60, Glu87 to Tyr90, Lys98, Arg114 to Arg115, and Gly183 to Asn184. The Tele-phosphohistidine intermediate role is filled by His9. Glu87 serves as the catalytic Proton donor/acceptor.

This sequence belongs to the phosphoglycerate mutase family. BPG-dependent PGAM subfamily.

It carries out the reaction (2R)-2-phosphoglycerate = (2R)-3-phosphoglycerate. The protein operates within carbohydrate degradation; glycolysis; pyruvate from D-glyceraldehyde 3-phosphate: step 3/5. Catalyzes the interconversion of 2-phosphoglycerate and 3-phosphoglycerate. The chain is 2,3-bisphosphoglycerate-dependent phosphoglycerate mutase from Bacillus cereus (strain G9842).